The chain runs to 374 residues: Very late expression factor 1 (374 aa).

Residues 169-349 (AIDTILNFID…NFDESSSDEE (181 aa)) form the Tyr recombinase domain. Residues Arg-210, Lys-239, Arg-303, and His-326 contribute to the active site. Residues 328-374 (SPASTKPYLNKYNFDESSSDEESGGNNRDSSTGSSANSSSLYYQTGD) are disordered. Tyr-335 (O-(3'-phospho-DNA)-tyrosine intermediate) is an active-site residue. The span at 357–367 (SSTGSSANSSS) shows a compositional bias: low complexity.

This sequence belongs to the 'phage' integrase family.

Functionally, involved in very late gene activation. The protein is Very late expression factor 1 (VLF-1) of Orgyia pseudotsugata (Douglas-fir tussock moth).